A 1451-amino-acid chain; its full sequence is Dicer-like protein 2 (1451 aa).

The tract at residues 34-53 is disordered; the sequence is YDGHLSEEDSPGGKPRPKEQ. Positions 70–247 constitute a Helicase ATP-binding domain; that stretch reads MLEASLKENI…LKRLESTLDA (178 aa). 83-90 contributes to the ATP binding site; that stretch reads MDTGSGKT. Residues 190-193 carry the DEAH box motif; sequence DEAH. The 171-residue stretch at 412–582 folds into the Helicase C-terminal domain; it reads KVQRIIEVLL…RLEAIENSEA (171 aa). In terms of domain architecture, Dicer dsRNA-binding fold spans 603-704; that stretch reads AKSHLQHFVS…LPLRDRLELE (102 aa). RNase III domains lie at 968–1111 and 1153–1351; these read AAEL…VDGG and LQLL…VDAG. Residue E1192 participates in Mg(2+) binding. The disordered stretch occupies residues 1253 to 1272; that stretch reads EGDSDSKSSGDSTSDKASPR. The Mg(2+) site is built by D1337 and E1340.

This sequence belongs to the helicase family. Dicer subfamily. Mg(2+) serves as cofactor. The cofactor is Mn(2+).

Its function is as follows. Dicer-like endonuclease involved in cleaving double-stranded RNA in the RNA interference (RNAi) pathway. Produces 21 to 25 bp dsRNAs (siRNAs) which target the selective destruction of homologous RNAs leading to sequence-specific suppression of gene expression, called post-transcriptional gene silencing (PTGS). Part of a broad host defense, DCL-2 is involved in antiviral defense against mycoviruses like the hypovirus CHV1-EP713 and the reovirus MyRV1-Cp9B21. This chain is Dicer-like protein 2 (DCL-2), found in Cryphonectria parasitica (Chestnut blight fungus).